The primary structure comprises 250 residues: tRNA (guanine-N(1)-)-methyltransferase (250 aa).

S-adenosyl-L-methionine contacts are provided by residues Gly116 and 136–141 (IGDYVL).

The protein belongs to the RNA methyltransferase TrmD family. Homodimer.

The protein resides in the cytoplasm. It catalyses the reaction guanosine(37) in tRNA + S-adenosyl-L-methionine = N(1)-methylguanosine(37) in tRNA + S-adenosyl-L-homocysteine + H(+). In terms of biological role, specifically methylates guanosine-37 in various tRNAs. In Pseudomonas putida (strain ATCC 47054 / DSM 6125 / CFBP 8728 / NCIMB 11950 / KT2440), this protein is tRNA (guanine-N(1)-)-methyltransferase.